The following is a 318-amino-acid chain: NADH-quinone oxidoreductase subunit H 2 (318 aa).

9 consecutive transmembrane segments (helical) span residues 4 to 24 (LLIALFSLILLLALLGAAGVF), 77 to 97 (LAPALAAFPMLAGFGVVAFAP), 106 to 126 (VGVLFVMGMLALTVWALVLGA), 146 to 166 (LAYESFLGLSLMGCVLLAGSF), 179 to 199 (LWFILLQPLGAALFFLAGLAA), 214 to 234 (LVAGFMTEYSGMSFALFFLGE), 238 to 258 (ILLVAALFTTLFLGGWAGPIL), 262 to 282 (IWFGLKVAAISVVFVWLRAAL), and 293 to 313 (FAWKVALPLALLNLLVTAWIA).

The protein belongs to the complex I subunit 1 family. NDH-1 is composed of 14 different subunits. Subunits NuoA, H, J, K, L, M, N constitute the membrane sector of the complex.

Its subcellular location is the cell inner membrane. It catalyses the reaction a quinone + NADH + 5 H(+)(in) = a quinol + NAD(+) + 4 H(+)(out). In terms of biological role, NDH-1 shuttles electrons from NADH, via FMN and iron-sulfur (Fe-S) centers, to quinones in the respiratory chain. The immediate electron acceptor for the enzyme in this species is believed to be ubiquinone. Couples the redox reaction to proton translocation (for every two electrons transferred, four hydrogen ions are translocated across the cytoplasmic membrane), and thus conserves the redox energy in a proton gradient. This subunit may bind ubiquinone. The polypeptide is NADH-quinone oxidoreductase subunit H 2 (Cereibacter sphaeroides (strain ATCC 17023 / DSM 158 / JCM 6121 / CCUG 31486 / LMG 2827 / NBRC 12203 / NCIMB 8253 / ATH 2.4.1.) (Rhodobacter sphaeroides)).